A 445-amino-acid chain; its full sequence is Methylphloroacetophenone oxidase (445 aa).

A helical membrane pass occupies residues 25-45; the sequence is VLSIALIGVACAISIRSILYV. Asparagine 51 carries an N-linked (GlcNAc...) asparagine glycan.

The protein belongs to the cytochrome P450 family.

It is found in the membrane. Its pathway is secondary metabolite biosynthesis. Its function is as follows. Methylphloroacetophenone oxidase; part of the gene cluster that mediates the biosynthesis of usnic acid, a dibenzofuran lichen product possessing a broad spectrum of biological activities. Two genes, mpas and mpao, comprise the usnic acid biosynthetic gene cluster with a single post-PKS enzyme, the methylphloracetophenone oxidase (mpao). The methylphloroacetophenone synthase (mpas) is a non-reducing polyketide synthase that produces methylphloracetophenone from acetate via a methylated tetraketide intermediate. The methylphloroacetophenone oxidase then carries out the oxidative dimerization of methylphloracetophenone to usnic acid. The polypeptide is Methylphloroacetophenone oxidase (Cladonia uncialis (Cup lichen)).